Here is a 324-residue protein sequence, read N- to C-terminus: Delta-aminolevulinic acid dehydratase (324 aa).

Zn(2+) is bound by residues C118, C120, and C128. The Schiff-base intermediate with substrate role is filled by K195. R205 and R217 together coordinate 5-aminolevulinate. E233 contributes to the Mg(2+) binding site. Catalysis depends on K248, which acts as the Schiff-base intermediate with substrate. 2 residues coordinate 5-aminolevulinate: S274 and Y313.

This sequence belongs to the ALAD family. As to quaternary structure, homooctamer. Zn(2+) serves as cofactor.

It carries out the reaction 2 5-aminolevulinate = porphobilinogen + 2 H2O + H(+). It functions in the pathway porphyrin-containing compound metabolism; protoporphyrin-IX biosynthesis; coproporphyrinogen-III from 5-aminolevulinate: step 1/4. Its function is as follows. Catalyzes an early step in the biosynthesis of tetrapyrroles. Binds two molecules of 5-aminolevulinate per subunit, each at a distinct site, and catalyzes their condensation to form porphobilinogen. The sequence is that of Delta-aminolevulinic acid dehydratase (hemB) from Staphylococcus aureus (strain NCTC 8325 / PS 47).